We begin with the raw amino-acid sequence, 119 residues long: ATP-dependent Clp protease adapter protein ClpS (119 aa).

It belongs to the ClpS family. Binds to the N-terminal domain of the chaperone ClpA.

Its function is as follows. Involved in the modulation of the specificity of the ClpAP-mediated ATP-dependent protein degradation. This Marinobacter nauticus (strain ATCC 700491 / DSM 11845 / VT8) (Marinobacter aquaeolei) protein is ATP-dependent Clp protease adapter protein ClpS.